Consider the following 354-residue polypeptide: Thiamine thiazole synthase (354 aa).

Residues Ala-83, 104–105, Gly-112, and Val-177 each bind substrate; that span reads EA. Position 210 is a 2,3-didehydroalanine (Cys) (Cys-210). Substrate is bound by residues Asp-212, His-227, Met-305, and 315 to 317; that span reads RMR.

Belongs to the THI4 family. In terms of assembly, homooctamer. Fe cation is required as a cofactor. During the catalytic reaction, a sulfide is transferred from Cys-210 to a reaction intermediate, generating a dehydroalanine residue.

Its subcellular location is the cytoplasm. It localises to the nucleus. The catalysed reaction is [ADP-thiazole synthase]-L-cysteine + glycine + NAD(+) = [ADP-thiazole synthase]-dehydroalanine + ADP-5-ethyl-4-methylthiazole-2-carboxylate + nicotinamide + 3 H2O + 2 H(+). Involved in biosynthesis of the thiamine precursor thiazole. Catalyzes the conversion of NAD and glycine to adenosine diphosphate 5-(2-hydroxyethyl)-4-methylthiazole-2-carboxylic acid (ADT), an adenylated thiazole intermediate. The reaction includes an iron-dependent sulfide transfer from a conserved cysteine residue of the protein to a thiazole intermediate. The enzyme can only undergo a single turnover, which suggests it is a suicide enzyme. May have additional roles in adaptation to various stress conditions and in DNA damage tolerance. The sequence is that of Thiamine thiazole synthase from Candida albicans (strain WO-1) (Yeast).